We begin with the raw amino-acid sequence, 432 residues long: Trigger factor (432 aa).

The region spanning 161-246 (EDRVTIDFTG…LKKVEERELP (86 aa)) is the PPIase FKBP-type domain.

The protein belongs to the FKBP-type PPIase family. Tig subfamily.

Its subcellular location is the cytoplasm. It carries out the reaction [protein]-peptidylproline (omega=180) = [protein]-peptidylproline (omega=0). In terms of biological role, involved in protein export. Acts as a chaperone by maintaining the newly synthesized protein in an open conformation. Functions as a peptidyl-prolyl cis-trans isomerase. This is Trigger factor from Salmonella typhi.